Consider the following 622-residue polypeptide: Sodium/potassium/calcium exchanger 4 (622 aa).

The signal sequence occupies residues 1 to 38; it reads MALRGLIRQSKVRRRREMLPQQVGFVCAVLALVCCASG. Residues 39 to 97 lie on the Extracellular side of the membrane; the sequence is LFGSLGHKTASAGKHVLLDTWRNRKLMAPINGTPLAKNCTDPAIHEFPTDLFSNKERQH. N-linked (GlcNAc...) asparagine glycosylation occurs at Asn76. A helical membrane pass occupies residues 98 to 118; that stretch reads GAVLLHILGALYMFYALAIVC. Over 119–142 the chain is Cytoplasmic; sequence DDFFVPSLEKICEKLHLSEDVAGA. Residues 139–179 form an Alpha-1 repeat; it reads VAGATFMAAGSSTPELFASVIGVFITHGDVGVGTIVGSAVF. A helical membrane pass occupies residues 143–163; the sequence is TFMAAGSSTPELFASVIGVFI. Residues 164 to 172 are Extracellular-facing; the sequence is THGDVGVGT. A helical membrane pass occupies residues 173 to 193; sequence IVGSAVFNILCIIGVCGLFAG. The Cytoplasmic segment spans residues 194 to 200; sequence QVVRLTW. Residues 201–221 form a helical membrane-spanning segment; the sequence is WAVCRDSVYYTLSVIVLIAFI. Over 222-224 the chain is Extracellular; the sequence is YDE. A helical membrane pass occupies residues 225 to 245; the sequence is EIVWWEGLVLIILYVFYILIM. Over 246–457 the chain is Cytoplasmic; sequence KYNMKMQTFF…RWEKFFMVTF (212 aa). The tract at residues 358 to 408 is disordered; sequence ANGVNSKPLQNGRHENMENGNVPVENPEDPQQGQEQQPPPQPPPPEPESVE. The span at 394-404 shows a compositional bias: pro residues; it reads QPPPQPPPPEP. The chain crosses the membrane as a helical span at residues 458 to 478; the sequence is ITATLWIAVFSYLMVWLVTII. A topological domain (extracellular) is located at residue Gly479. A helical transmembrane segment spans residues 480–500; the sequence is YTLGIPDVIMGITFLAAGTSV. The stretch at 495–526 is one Alpha-2 repeat; the sequence is AAGTSVPDCMASLIVARQGLGDMAVSNTIGSN. Residues 501-526 lie on the Cytoplasmic side of the membrane; it reads PDCMASLIVARQGLGDMAVSNTIGSN. Residues 527 to 547 traverse the membrane as a helical segment; that stretch reads VFDILVGLGIPWGLQTMVINY. Over 548 to 557 the chain is Extracellular; that stretch reads GSTVKINSRG. Residues 558 to 578 traverse the membrane as a helical segment; that stretch reads LVYSVVLLLGSVALTVLGIHL. Residues 579-586 are Cytoplasmic-facing; the sequence is NKWRLDRK. The chain crosses the membrane as a helical span at residues 587 to 607; sequence LGIYVLVLYAVFLCFSIMIEF. Residues 608–622 are Extracellular-facing; sequence NVFTFVNLPMCREDD.

It belongs to the Ca(2+):cation antiporter (CaCA) (TC 2.A.19) family. SLC24A subfamily. As to expression, expressed in late secretory-stage and maturation-stage ameloblasts, with significantly increased expression during the late stages of amelogenesis (at protein level). Widely expressed in most regions of the brain, including hippocampus, neocortex, thalamus, striatum and olfactory bulb. Expressed in the olfactory sensory neurons.

It is found in the cell membrane. Its subcellular location is the cytoplasm. The enzyme catalyses Ca(2+)(out) + K(+)(out) + 4 Na(+)(in) = Ca(2+)(in) + K(+)(in) + 4 Na(+)(out). In terms of biological role, calcium, potassium:sodium antiporter that transports 1 Ca(2+) and 1 K(+) in exchange for 4 Na(+). Controls the rapid response termination and proper regulation of adaptation in olfactory sensory neurons (OSNs) which subsequently influences how odor information is encoded and perceived. May play a role in calcium transport during amelogenesis. This Mus musculus (Mouse) protein is Sodium/potassium/calcium exchanger 4.